The sequence spans 332 residues: Glycerol-3-phosphate dehydrogenase [NAD(P)+] (332 aa).

The NADPH site is built by Ser11, Trp12, Lys32, and Lys106. Positions 106, 137, and 139 each coordinate sn-glycerol 3-phosphate. Ala141 is an NADPH binding site. Sn-glycerol 3-phosphate-binding residues include Lys192, Asp245, Ser255, Arg256, and Asn257. Lys192 (proton acceptor) is an active-site residue. Arg256 lines the NADPH pocket. Residues Val280 and Glu282 each contribute to the NADPH site.

It belongs to the NAD-dependent glycerol-3-phosphate dehydrogenase family.

It localises to the cytoplasm. The enzyme catalyses sn-glycerol 3-phosphate + NAD(+) = dihydroxyacetone phosphate + NADH + H(+). It catalyses the reaction sn-glycerol 3-phosphate + NADP(+) = dihydroxyacetone phosphate + NADPH + H(+). It functions in the pathway membrane lipid metabolism; glycerophospholipid metabolism. Functionally, catalyzes the reduction of the glycolytic intermediate dihydroxyacetone phosphate (DHAP) to sn-glycerol 3-phosphate (G3P), the key precursor for phospholipid synthesis. This is Glycerol-3-phosphate dehydrogenase [NAD(P)+] from Macrococcus caseolyticus (strain JCSC5402) (Macrococcoides caseolyticum).